The sequence spans 155 residues: Ribonuclease H (155 aa).

Residues 1–142 (MLKQVEIFTD…CDELARAAAM (142 aa)) enclose the RNase H type-1 domain. Asp-10, Glu-48, Asp-70, and Asp-134 together coordinate Mg(2+).

Belongs to the RNase H family. Monomer. Mg(2+) is required as a cofactor.

The protein resides in the cytoplasm. The catalysed reaction is Endonucleolytic cleavage to 5'-phosphomonoester.. In terms of biological role, endonuclease that specifically degrades the RNA of RNA-DNA hybrids. The sequence is that of Ribonuclease H from Citrobacter koseri (strain ATCC BAA-895 / CDC 4225-83 / SGSC4696).